Reading from the N-terminus, the 177-residue chain is ATP synthase subunit delta (177 aa).

This sequence belongs to the ATPase delta chain family. In terms of assembly, F-type ATPases have 2 components, F(1) - the catalytic core - and F(0) - the membrane proton channel. F(1) has five subunits: alpha(3), beta(3), gamma(1), delta(1), epsilon(1). F(0) has three main subunits: a(1), b(2) and c(10-14). The alpha and beta chains form an alternating ring which encloses part of the gamma chain. F(1) is attached to F(0) by a central stalk formed by the gamma and epsilon chains, while a peripheral stalk is formed by the delta and b chains.

Its subcellular location is the cell inner membrane. Its function is as follows. F(1)F(0) ATP synthase produces ATP from ADP in the presence of a proton or sodium gradient. F-type ATPases consist of two structural domains, F(1) containing the extramembraneous catalytic core and F(0) containing the membrane proton channel, linked together by a central stalk and a peripheral stalk. During catalysis, ATP synthesis in the catalytic domain of F(1) is coupled via a rotary mechanism of the central stalk subunits to proton translocation. In terms of biological role, this protein is part of the stalk that links CF(0) to CF(1). It either transmits conformational changes from CF(0) to CF(1) or is implicated in proton conduction. This Klebsiella pneumoniae subsp. pneumoniae (strain ATCC 700721 / MGH 78578) protein is ATP synthase subunit delta.